The chain runs to 420 residues: Mannose-1-phosphate guanylyltransferase regulatory subunit alpha (420 aa).

Positions 2–251 (LKAVILIGGP…DGIWSQIKSA (250 aa)) are substrate-binding domain. GDP-alpha-D-mannose is bound by residues Glu-85 and Gln-247. The interval 273 to 420 (LAKHTPGGPR…SRSFTNQIIL (148 aa)) is hexapeptide repeat domain. Residues 356 to 384 (TPNDPNPNDPRAHMDSESLFKDGKLLPAI) form a C-loop region.

It belongs to the transferase hexapeptide repeat family. Component of the GMPPA-GMPPB mannose-1-phosphate guanylyltransferase complex composed of 4 GMPPA subunits and 8 GMPPB subunits; the complex is organized into three layers, a central layer made up of 2 GMPPA dimers sandwiched between two layers each made up of 2 GMPPB dimers. In terms of tissue distribution, expressed in the liver (at protein level).

The protein localises to the cytoplasm. Regulatory subunit of the GMPPA-GMPPB mannose-1-phosphate guanylyltransferase complex; reduces the catalytic activity of GMPPB when part of the complex. Mediates allosteric feedback inhibition of GMPPB catalytic activity upon binding GDP-alpha-D-mannose. Together with GMPPB regulates GDP-alpha-D-mannose levels. The chain is Mannose-1-phosphate guanylyltransferase regulatory subunit alpha (GMPPA) from Sus scrofa (Pig).